Here is a 130-residue protein sequence, read N- to C-terminus: Ribosome-binding factor A (130 aa).

This sequence belongs to the RbfA family. Monomer. Binds 30S ribosomal subunits, but not 50S ribosomal subunits or 70S ribosomes.

The protein resides in the cytoplasm. In terms of biological role, one of several proteins that assist in the late maturation steps of the functional core of the 30S ribosomal subunit. Associates with free 30S ribosomal subunits (but not with 30S subunits that are part of 70S ribosomes or polysomes). Required for efficient processing of 16S rRNA. May interact with the 5'-terminal helix region of 16S rRNA. The polypeptide is Ribosome-binding factor A (Prochlorococcus marinus (strain MIT 9312)).